Consider the following 155-residue polypeptide: Leader peptidase HopD (155 aa).

It belongs to the peptidase A24 family.

In Escherichia coli, this protein is Leader peptidase HopD (hopD).